Consider the following 211-residue polypeptide: Shikimate kinase (211 aa).

The interval 1-23 is disordered; it reads MNASANLCAASDNDPQPGDQEAA. An ATP-binding site is contributed by 50–55; sequence GAGKTT. Thr-54 contacts Mg(2+). The substrate site is built by Asp-72, Arg-96, and Gly-118. Arg-156 provides a ligand contact to ATP. Arg-175 serves as a coordination point for substrate.

Belongs to the shikimate kinase family. In terms of assembly, monomer. It depends on Mg(2+) as a cofactor.

The protein localises to the cytoplasm. The enzyme catalyses shikimate + ATP = 3-phosphoshikimate + ADP + H(+). It functions in the pathway metabolic intermediate biosynthesis; chorismate biosynthesis; chorismate from D-erythrose 4-phosphate and phosphoenolpyruvate: step 5/7. Catalyzes the specific phosphorylation of the 3-hydroxyl group of shikimic acid using ATP as a cosubstrate. The protein is Shikimate kinase of Bordetella bronchiseptica (strain ATCC BAA-588 / NCTC 13252 / RB50) (Alcaligenes bronchisepticus).